Here is a 507-residue protein sequence, read N- to C-terminus: Protein phosphatase 1J (507 aa).

Disordered regions lie at residues 1–102 (MLNR…RLPW) and 197–220 (LCLP…PQSC). Over residues 14-23 (SSGGTSSQRS) the composition is skewed to low complexity. Thr-41 carries the post-translational modification Phosphothreonine. The segment covering 59 to 73 (TAETTVSFSRPTFLQ) has biased composition (polar residues). Phosphoserine is present on residues Ser-65 and Ser-75. In terms of domain architecture, PPM-type phosphatase spans 103 to 499 (STGYAEVINA…DDISVFVIPL (397 aa)). The span at 199-212 (LPSTPGTPGAPSPS) shows a compositional bias: low complexity.

The protein belongs to the PP2C family. As to quaternary structure, interacts with UBE2I/UBC9. As to expression, specifically expressed in the testicular germ cells.

The catalysed reaction is O-phospho-L-seryl-[protein] + H2O = L-seryl-[protein] + phosphate. The enzyme catalyses O-phospho-L-threonyl-[protein] + H2O = L-threonyl-[protein] + phosphate. The sequence is that of Protein phosphatase 1J (Ppm1j) from Mus musculus (Mouse).